The following is a 1848-amino-acid chain: Cellulose-binding protein A (1848 aa).

Positions 1–28 are cleaved as a signal peptide; that stretch reads MQKKKSLNLLLALMMVFALVLPSIPALA. One can recognise a CBM3 domain in the interval 29–190; the sequence is ATSSMSVEFY…GAKVLGTAPG (162 aa). 9 Cohesin domains span residues 291–428, 435–570, 668–801, 810–943, 952–1085, 1094–1227, 1236–1369, 1377–1511, and 1709–1847; these read VTAT…TVTI, MQIS…SVTI, VTAT…SVTI, VKAT…RLTI, and FAVK…SVKV.

Post-translationally, the N-terminus is blocked. In terms of processing, glycosylated.

It is found in the secreted. In terms of biological role, binds to cellulose fibers and coordinates cellulase enzymes. The sequence is that of Cellulose-binding protein A (cbpA) from Clostridium cellulovorans.